A 561-amino-acid polypeptide reads, in one-letter code: MLPEQQQHLISLLARAVAGILPEASPDILLERPKVAAHGDVATNVAMQLAKPAKRNPRELAQGIVDALLADPQARAIVDSAEIAGPGFINLRFTAQARQAVVAAVSAQGAAFGRAARRDEKVLVEFVSANPTGPLHVGHARQAALGDAICRLFDASGWDVTREFYYNDAGNQIQNLAISVQARARGIGPDAPEWPADGYKGDYIADIARDYLAQASVQAADGEPVQASGNIDDLEDIRAFAVAYLRREQDLDLQAFGLKFDNFFLESSLYTSGRVERTVETLIAKGHTYEQDGALWLRTTELGTGDDKDRVMRKSEGGYTYFVPDVAYHLAKWERGFHHAINIQGSDHHGTVARVRAGLQGLEEGIPKEFPAYVLHKMVKVMRGGEEVKISKRAGSYVTMRDLIEWVGRDAVRYFLIQRRADTEFVFDIDLALSKSDENPVYYIQYAHARICSMIASSGLDDATIAAADAARLTAPSEFALMQRLAEFPNVVKLAAQELAPHHIAFWLRDCASDFHGWYNAERVLVDDEGLKQARLRLAATTRQVLANGLALLGVTALERM.

Positions 129-139 (ANPTGPLHVGH) match the 'HIGH' region motif.

The protein belongs to the class-I aminoacyl-tRNA synthetase family. In terms of assembly, monomer.

Its subcellular location is the cytoplasm. The catalysed reaction is tRNA(Arg) + L-arginine + ATP = L-arginyl-tRNA(Arg) + AMP + diphosphate. This Bordetella avium (strain 197N) protein is Arginine--tRNA ligase.